The following is a 321-amino-acid chain: Coiled-coil domain-containing protein 42-like 1 (321 aa).

Coiled coils occupy residues 36-144 and 202-229; these read IRRL…EKCH and IVQF…WELR.

The protein belongs to the CFAP73 family.

The chain is Coiled-coil domain-containing protein 42-like 1 from Xenopus laevis (African clawed frog).